A 212-amino-acid chain; its full sequence is Lipid A acyltransferase PagP (212 aa).

Positions 1-26 (MSSTYFHSSLLAATLFSVTLTAPAFA) are cleaved as a signal peptide. A compositionally biased stretch (low complexity) spans 29–44 (NTQNTPQTITTKKPQP). The disordered stretch occupies residues 29 to 50 (NTQNTPQTITTKKPQPAENTFS). Catalysis depends on residues histidine 84, aspartate 127, and serine 128.

The protein belongs to the lipid A palmitoyltransferase family. In terms of assembly, homodimer.

Its subcellular location is the cell outer membrane. It catalyses the reaction a lipid A + a 1,2-diacyl-sn-glycero-3-phosphocholine = a hepta-acyl lipid A + a 2-acyl-sn-glycero-3-phosphocholine. The catalysed reaction is a lipid IVA + a 1,2-diacyl-sn-glycero-3-phosphocholine = a lipid IVB + a 2-acyl-sn-glycero-3-phosphocholine. It carries out the reaction a lipid IIA + a 1,2-diacyl-sn-glycero-3-phosphocholine = a lipid IIB + a 2-acyl-sn-glycero-3-phosphocholine. Transfers a fatty acid residue from the sn-1 position of a phospholipid to the N-linked hydroxyfatty acid chain on the proximal unit of lipid A or its precursors. This is Lipid A acyltransferase PagP from Proteus mirabilis (strain HI4320).